A 345-amino-acid polypeptide reads, in one-letter code: Dihydroorotase (345 aa).

Residues H13 and H15 each contribute to the Zn(2+) site. Residues 15-17 (HLR) and N41 each bind substrate. Zn(2+) is bound by residues K99, H136, and H174. K99 carries the post-translational modification N6-carboxylysine. Position 136 (H136) interacts with substrate. Residue L219 coordinates substrate. Zn(2+) is bound at residue D247. Residue D247 is part of the active site. Substrate-binding residues include H251 and A263.

This sequence belongs to the metallo-dependent hydrolases superfamily. DHOase family. Class II DHOase subfamily. Homodimer. Zn(2+) is required as a cofactor.

It carries out the reaction (S)-dihydroorotate + H2O = N-carbamoyl-L-aspartate + H(+). It functions in the pathway pyrimidine metabolism; UMP biosynthesis via de novo pathway; (S)-dihydroorotate from bicarbonate: step 3/3. Catalyzes the reversible cyclization of carbamoyl aspartate to dihydroorotate. This chain is Dihydroorotase, found in Acaryochloris marina (strain MBIC 11017).